Reading from the N-terminus, the 504-residue chain is 2-methylcitrate dehydratase 2 (504 aa).

This sequence belongs to the PrpD family. Monomer.

It catalyses the reaction (2S,3S)-2-methylcitrate = 2-methyl-cis-aconitate + H2O. The enzyme catalyses citrate = D-threo-isocitrate. Its pathway is organic acid metabolism; propanoate degradation. It participates in carbohydrate metabolism; tricarboxylic acid cycle; isocitrate from oxaloacetate: step 1/2. Functionally, involved in the catabolism of short chain fatty acids (SCFA) via the 2-methylcitrate cycle I (propionate degradation route). Catalyzes the dehydration of 2-methylcitrate (2-MC) to yield the cis isomer 2-methyl-aconitate. Could also catalyze the dehydration of citrate and the hydration of cis-aconitate. The polypeptide is 2-methylcitrate dehydratase 2 (prpD2) (Corynebacterium glutamicum (strain ATCC 13032 / DSM 20300 / JCM 1318 / BCRC 11384 / CCUG 27702 / LMG 3730 / NBRC 12168 / NCIMB 10025 / NRRL B-2784 / 534)).